Here is a 64-residue protein sequence, read N- to C-terminus: Large ribosomal subunit protein bL32 (64 aa).

The disordered stretch occupies residues 1 to 28 (MAVQKSRVTPSRRGQRRSHDALTAKKLS).

It belongs to the bacterial ribosomal protein bL32 family.

The chain is Large ribosomal subunit protein bL32 (rpmF) from Xylella fastidiosa (strain 9a5c).